A 397-amino-acid polypeptide reads, in one-letter code: Tyrosine aminotransferase (397 aa).

4 residues coordinate substrate: G34, Y66, W131, and N184. N6-(pyridoxal phosphate)lysine is present on K247. Position 375 (R375) interacts with substrate.

The protein belongs to the class-I pyridoxal-phosphate-dependent aminotransferase family. As to quaternary structure, homodimer. Pyridoxal 5'-phosphate is required as a cofactor.

It catalyses the reaction L-tyrosine + 2-oxoglutarate = 3-(4-hydroxyphenyl)pyruvate + L-glutamate. It carries out the reaction 4-methylsulfanyl-2-oxobutanoate + L-tyrosine = 3-(4-hydroxyphenyl)pyruvate + L-methionine. The catalysed reaction is an aromatic L-alpha-amino acid + 2-oxoglutarate = an aromatic oxo-acid + L-glutamate. The enzyme catalyses L-aspartate + 2-oxoglutarate = oxaloacetate + L-glutamate. The protein operates within amino-acid biosynthesis; L-methionine biosynthesis via salvage pathway; L-methionine from S-methyl-5-thio-alpha-D-ribose 1-phosphate: step 6/6. With respect to regulation, inhibited by malate and nitrotyrosine by approximately 20% at the higher concentration. At 100 uM, canaline and carboxymethoxylamine inhibit aminotransferase activity by 35 and 70%, respectively. Addition of 1.0 mM carboxymethoxylamine lead to a complete inhibition of the aminotransferase activity. In terms of biological role, catalyzes the formation of methionine from 2-keto-4-methylthiobutyrate (KMTB) primarily using aromatic amino acids (tyrosine, phenylalanine and tryptophan) or glutamate as the amino donors. Histidine, leucine, asparagine, or arginine are also functional amino donors but to a lesser extent. Can also use alpha-ketoglutarate, oxaloacetate and pyruvate as the amino acceptors. The chain is Tyrosine aminotransferase (tyrB) from Klebsiella pneumoniae.